Consider the following 422-residue polypeptide: 4-hydroxy-3-methylbut-2-en-1-yl diphosphate synthase (flavodoxin) (422 aa).

The [4Fe-4S] cluster site is built by Cys-316, Cys-319, Cys-362, and Glu-369.

Belongs to the IspG family. The cofactor is [4Fe-4S] cluster.

The catalysed reaction is (2E)-4-hydroxy-3-methylbut-2-enyl diphosphate + oxidized [flavodoxin] + H2O + 2 H(+) = 2-C-methyl-D-erythritol 2,4-cyclic diphosphate + reduced [flavodoxin]. It functions in the pathway isoprenoid biosynthesis; isopentenyl diphosphate biosynthesis via DXP pathway; isopentenyl diphosphate from 1-deoxy-D-xylulose 5-phosphate: step 5/6. Converts 2C-methyl-D-erythritol 2,4-cyclodiphosphate (ME-2,4cPP) into 1-hydroxy-2-methyl-2-(E)-butenyl 4-diphosphate. This Ehrlichia canis (strain Jake) protein is 4-hydroxy-3-methylbut-2-en-1-yl diphosphate synthase (flavodoxin).